A 468-amino-acid polypeptide reads, in one-letter code: 6-phosphogluconate dehydrogenase, decarboxylating (468 aa).

Residues 9 to 14 (GLAVMG), 32 to 34 (NRS), 73 to 75 (VQA), and Asn101 contribute to the NADP(+) site. Substrate-binding positions include Asn101 and 127–129 (SGG). Lys182 serves as the catalytic Proton acceptor. 185 to 186 (HN) serves as a coordination point for substrate. Glu189 serves as the catalytic Proton donor. Residues Tyr190, Lys259, Arg286, Arg444, and His450 each contribute to the substrate site.

The protein belongs to the 6-phosphogluconate dehydrogenase family. In terms of assembly, homodimer.

The enzyme catalyses 6-phospho-D-gluconate + NADP(+) = D-ribulose 5-phosphate + CO2 + NADPH. Its pathway is carbohydrate degradation; pentose phosphate pathway; D-ribulose 5-phosphate from D-glucose 6-phosphate (oxidative stage): step 3/3. Its function is as follows. Catalyzes the oxidative decarboxylation of 6-phosphogluconate to ribulose 5-phosphate and CO(2), with concomitant reduction of NADP to NADPH. This chain is 6-phosphogluconate dehydrogenase, decarboxylating (gnd), found in Staphylococcus aureus (strain COL).